The chain runs to 2151 residues: Polycystin-1-like protein 3 (2151 aa).

The first 20 residues, 1 to 20 (MLLQRRSWLWLYIRIGVILG), serve as a signal peptide directing secretion. Residues 25 to 1073 (RKPSIREQHG…IKLLLHVTNN (1049 aa)) lie on the Extracellular side of the membrane. In terms of domain architecture, C-type lectin spans 34–142 (GGNSCYQLNR…CIEKHHFICQ (109 aa)). Intrachain disulfides connect Cys-55-Cys-141 and Cys-116-Cys-133. An N-linked (GlcNAc...) asparagine glycan is attached at Asn-89. Polar residues predominate over residues 222 to 245 (SLTGRPQVTSDTLASSSPPQGTSD). The tract at residues 222 to 609 (SLTGRPQVTS…SSSPPWPVIT (388 aa)) is disordered. The segment covering 246–348 (TPASSSPPQV…ASSSPPQGTS (103 aa)) has biased composition (low complexity). Polar residues-rich tracts occupy residues 349–363 (DTPASSSPPQGTLDT) and 371–600 (QGTS…TPAS). N-linked (GlcNAc...) asparagine glycans are attached at residues Asn-566, Asn-579, Asn-592, Asn-913, and Asn-951. Residues 899 to 1061 (TSLNTSTDHF…FIVPRTVDVE (163 aa)) enclose the GAIN-B domain. 2 disulfide bridges follow: Cys-1011–Cys-1039 and Cys-1026–Cys-1041. The tract at residues 1011 to 1061 (CYFWDRYNRTWKSDGCQVGPKSTILKTQCLCDHLTFFSSDFFIVPRTVDVE) is GPS. The tract at residues 1045–1061 (TFFSSDFFIVPRTVDVE) is stachel. A helical transmembrane segment spans residues 1074-1094 (PVGVSLLSSLLGFYILLAMWA). Topologically, residues 1095-1283 (SRKDREDMQK…NQFTRVQRLS (189 aa)) are cytoplasmic. Residues 1119–1236 (SHYLIQVYTG…GNCERDRVFT (118 aa)) enclose the PLAT domain. A helical membrane pass occupies residues 1284–1304 (CCMALLLCDMVINIMFWKMGG). Over 1305-1320 (TTAKRGTEQLGPLAVT) the chain is Extracellular. A helical membrane pass occupies residues 1321–1341 (LSELLVSIQTSIILFPIHLIF). At 1342-1533 (GRLFQLIHPP…FCLFRWLKCS (192 aa)) the chain is on the cytoplasmic side. Residues 1534–1554 (CWLLLGVISLASAFFITLYSL) traverse the membrane as a helical segment. Residues 1555–1575 (ELDKDQATSWVISMMLSVLQD) are Extracellular-facing. A helical transmembrane segment spans residues 1576–1596 (IFISQPIKVIFLTLLFSLMAN). Topologically, residues 1597-1665 (HMPWLNKDKE…KLTGGTLVQI (69 aa)) are cytoplasmic. Residues 1666–1676 (LFLTLLMTTVY) traverse the membrane as a helical segment. The Extracellular segment spans residues 1677-1892 (SAKDSSRFFL…SLTSLQSSER (216 aa)). Asn-1712 and Asn-1822 each carry an N-linked (GlcNAc) asparagine glycan. A helical membrane pass occupies residues 1893–1921 (GFAWIVSQVVYYLLVCYYAFIQGCRLKRQ). Over 1922 to 1930 (RLAFFTRKR) the chain is Cytoplasmic. Residues 1931–1949 (NLLDTSIVLISFSILGLSM) form a helical membrane-spanning segment. Residues 1950-1980 (QSLSLLHKKMQQYHCDRDRFISFYEALRVNS) lie on the Extracellular side of the membrane. Residues 1981–2002 (AVTHLRGFLLLFATVRVWDLLR) traverse the membrane as a helical segment. The Cytoplasmic portion of the chain corresponds to 2003–2019 (HHAQLQVINKTLSKAWD). The chain crosses the membrane as a helical span at residues 2020–2044 (EVLGFILIIVVLLSSYAMTFNLLFG). Residues 2043–2081 (FGWSISDYQSFFRSIVTVVGLLMGTSKHKEVIALYPILG) form a channel pore-region region. The Extracellular segment spans residues 2045-2077 (WSISDYQSFFRSIVTVVGLLMGTSKHKEVIALY). The helical transmembrane segment at 2078–2097 (PILGSLLVLSSIILMGLVII) threads the bilayer. Topologically, residues 2098–2151 (NLFVSAILIAFGKERKACEKEATLTDMLLQKLSSLLGIRLHQNPSEEHADNTGY) are cytoplasmic.

This sequence belongs to the polycystin family. Heterotetramer with PKD2L1, composed of 3 subunit of PKD2L1 and 1 subunit of PKD1L3. Post-translationally, autoproteolytically processed at the GPS region of the GAIN-B domain; this cleavage modulates receptor activity. As to expression, expressed in a subset of taste receptor cells (type III taste cells) distinct from those involved in bitter, sweet and umami taste. Expressed in circumvallate and foliate taste buds, but not in surrounding non-gustatory lingual epithelium cells. Expressed in testis.

The protein localises to the cell membrane. It catalyses the reaction Ca(2+)(in) = Ca(2+)(out). The catalysed reaction is Na(+)(in) = Na(+)(out). It carries out the reaction K(+)(in) = K(+)(out). The enzyme catalyses Mg(2+)(in) = Mg(2+)(out). The non-selective cation channel is gated following an off-response property by acid: gated open after the removal of acid stimulus, but not during acid application. Non-selective cation channel activity is inhibited by capsaicin. Regulation of non-selective cation channel activity by external Ca(2+) is bimodal, first sensitizing and subsequently inactivating the current. The apo (closed) heterotetramer has an asymmetric selectivity filter (SF) guarded by Lys-2069 in absence of Ca(2+). However, Ca(2+)-entrance to the SF vestibule is accompanied by a swing motion of Lys-2069 on PKD1L3. Pore-forming subunit of a heterotetrameric, non-selective cation channel that is permeable to Ca(2+). Also shows permeability towards NA(1+), K(+) and Mg(2+). Heterotetrameric complex channel is activated by external low pH and Ca(2+), but opens only when the extracellular pH rises again and after the removal of acid stimulus. May act as a sour taste receptor in gustatory cells; however, its contribution to sour taste perception is unclear in vivo and may be indirect. This is Polycystin-1-like protein 3 from Mus musculus (Mouse).